Here is a 607-residue protein sequence, read N- to C-terminus: UvrABC system protein C (607 aa).

Residues 16–94 form the GIY-YIG domain; the sequence is ARPGVYRMFD…IKQWRPPYNI (79 aa). Positions 203 to 238 constitute a UVR domain; that stretch reads QQLGNELNAEMEKAAMALNFEKAAELRDQIALLRRV.

Belongs to the UvrC family. Interacts with UvrB in an incision complex.

It localises to the cytoplasm. The UvrABC repair system catalyzes the recognition and processing of DNA lesions. UvrC both incises the 5' and 3' sides of the lesion. The N-terminal half is responsible for the 3' incision and the C-terminal half is responsible for the 5' incision. The sequence is that of UvrABC system protein C from Pseudomonas putida (strain W619).